Reading from the N-terminus, the 361-residue chain is Serpentine receptor class epsilon-32 (361 aa).

A run of 7 helical transmembrane segments spans residues 34–54 (IIELVFYISCFHLMTISLYVM), 66–86 (ILYIPMFCVWYGLIAGKLITI), 124–144 (LLIFGGFVQWHYMYTVVYGIL), 168–188 (IPIALTIITQFLAISTSLSVL), 195–215 (FLSHLPWIISCSLGALAYLFI), 256–276 (LVFVVFFYVAFVSFGMFALAF), and 286–306 (FVENFLFLNPYPICFTAMLTI).

Belongs to the nematode receptor-like protein sre family.

It is found in the membrane. The protein is Serpentine receptor class epsilon-32 (sre-32) of Caenorhabditis elegans.